The following is a 276-amino-acid chain: NH(3)-dependent NAD(+) synthetase (276 aa).

39–46 (GLSGGVDS) serves as a coordination point for ATP. Asp45 lines the Mg(2+) pocket. Arg123 is a deamido-NAD(+) binding site. ATP is bound at residue Thr143. Position 148 (Glu148) interacts with Mg(2+). 2 residues coordinate deamido-NAD(+): Lys156 and Asp163. 2 residues coordinate ATP: Lys172 and Ser194. Residue 254-255 (HK) participates in deamido-NAD(+) binding.

The protein belongs to the NAD synthetase family. Homodimer.

It catalyses the reaction deamido-NAD(+) + NH4(+) + ATP = AMP + diphosphate + NAD(+) + H(+). It participates in cofactor biosynthesis; NAD(+) biosynthesis; NAD(+) from deamido-NAD(+) (ammonia route): step 1/1. In terms of biological role, catalyzes the ATP-dependent amidation of deamido-NAD to form NAD. Uses ammonia as a nitrogen source. The polypeptide is NH(3)-dependent NAD(+) synthetase (Hyperthermus butylicus (strain DSM 5456 / JCM 9403 / PLM1-5)).